Here is a 325-residue protein sequence, read N- to C-terminus: Adenine deaminase (325 aa).

The Zn(2+) site is built by H8, H10, and H186. Catalysis depends on E189, which acts as the Proton donor. Position 267 (D267) interacts with Zn(2+). D268 lines the substrate pocket.

This sequence belongs to the metallo-dependent hydrolases superfamily. Adenosine and AMP deaminases family. Adenine deaminase type 2 subfamily. It depends on Zn(2+) as a cofactor.

The enzyme catalyses adenine + H2O + H(+) = hypoxanthine + NH4(+). In terms of biological role, catalyzes the hydrolytic deamination of adenine to hypoxanthine. Plays an important role in the purine salvage pathway and in nitrogen catabolism. This chain is Adenine deaminase, found in Chelativorans sp. (strain BNC1).